A 192-amino-acid chain; its full sequence is Virion infectivity factor (192 aa).

The interaction with host APOBEC3F; F1-box stretch occupies residues 14–17 (DRMR). The tract at residues 40–44 (YRHHY) is interaction with host APOBEC3G; G-box. The tract at residues 54–72 (EVHIPLGEARLVVTTYWGL) is interaction with host APOBEC3F and APOBEC3G; FG-box. Residues 74-79 (TGEKEW) form an interaction with host APOBEC3F; F2-box region. Residues 75-114 (GEKEWHLGQGVSIEWRKRRYSTQVDPGLADQLIHMYYFDC) form an RNA-binding region. Threonine 96 carries the post-translational modification Phosphothreonine; by host MAP4K1. Residues histidine 108, cysteine 114, cysteine 133, and histidine 139 each contribute to the Zn(2+) site. Positions 108–139 (HMYYFDCFAESAIRKAILGHIVSPSCEYQAGH) match the HCCH motif motif. Serine 144 carries the phosphoserine; by host modification. A BC-box-like motif motif is present at residues 144–153 (SLQYLALAAL). Residues 151 to 164 (AALIAPKKIKPPLP) are multimerization. An SOCS box-like region spans residues 151 to 180 (AALIAPKKIKPPLPSVRKLTEDRWNKPQKT). At serine 165 the chain carries Phosphoserine; by host MAP4K1. Residues 165 to 192 (SVRKLTEDRWNKPQKTKGRRGSHTMNGH) form a disordered region. The segment at 171 to 172 (ED) is membrane association. Residues 176–186 (KPQKTKGRRGS) show a composition bias toward basic residues. At threonine 188 the chain carries Phosphothreonine; by host.

It belongs to the primate lentivirus group Vif protein family. In terms of assembly, homomultimer; in vitro and presumably in vivo. Interacts with viral RNA and Pr55Gag precursor; these interactions mediate Vif incorporation into the virion. Interacts with the viral reverse transcriptase. Forms cullin-5-RING E3 ubiquitin-protein ligase complex (ECS complex) by interacting with host CUL5, RBX2, elongin BC complex (ELOB and ELOC) and CBFB/CBF-beta. Within the ECS complex, Vif interacts directly with host CUL5, ELOC and APOBEC (APOBEC3F and APOBEC3G) substrates. The ECS complex also contains some single-stranded RNA (ssRNA) that acts as a glue that bridges Vif with APOBEC (APOBEC3F and APOBEC3G) substrates. Interacts with host UBCE7IP1 isoform 3/ZIN and possibly with SAT. Interacts with host tyrosine kinases HCK and FYN; these interactions may decrease level of phosphorylated APOBEC3G incorporation into virions. Interacts with host ABCE1; this interaction may play a role in protecting viral RNA from damage during viral assembly. Interacts with host MDM2; this interaction targets Vif for degradation by the proteasome. Processed in virion by the viral protease. In terms of processing, highly phosphorylated on serine and threonine residues. Post-translationally, polyubiquitinated and degraded by the proteasome in the presence of APOBEC3G.

The protein resides in the host cytoplasm. The protein localises to the host cell membrane. It is found in the virion. In terms of biological role, counteracts the innate antiviral activity of host APOBEC3F and APOBEC3G by promoting their ubiquitination and degradation. Acts as a substrate recognition component of an E3 ubiquitin-protein ligase complex: mechanistically, Vif hijacks a host cullin-5-RING E3 ubiquitin-protein ligase complex (ECS complex) and the transcription coactivator CBFB/CBF-beta to form an active E3 ubiquitin-protein ligase complex that targets APOBEC3G and APOBEC3F for polyubiquitination, leading to their degradation by the proteasome. Vif interaction with APOBEC3G also blocks its cytidine deaminase activity in a proteasome-independent manner, suggesting a dual inhibitory mechanism. May interact directly with APOBEC3G mRNA in order to inhibit its translation. Association with CBFB/CBF-beta also inhibits the transcription coactivator activity of CBFB/CBF-beta. Seems to play a role in viral morphology by affecting the stability of the viral nucleoprotein core. Finally, Vif also contributes to the G2 cell cycle arrest observed in HIV infected cells. This is Virion infectivity factor from Human immunodeficiency virus type 1 group M subtype D (isolate NDK) (HIV-1).